The chain runs to 372 residues: Putative glutamate--cysteine ligase 2 (372 aa).

It belongs to the glutamate--cysteine ligase type 2 family. YbdK subfamily. In terms of assembly, homodimer.

The catalysed reaction is L-cysteine + L-glutamate + ATP = gamma-L-glutamyl-L-cysteine + ADP + phosphate + H(+). Functionally, ATP-dependent carboxylate-amine ligase which exhibits weak glutamate--cysteine ligase activity. The chain is Putative glutamate--cysteine ligase 2 from Citrobacter koseri (strain ATCC BAA-895 / CDC 4225-83 / SGSC4696).